A 77-amino-acid polypeptide reads, in one-letter code: Large ribosomal subunit protein bL28 (77 aa).

The interval 1-25 (MARVCQVTGKAPMSGNNVSHANNKT) is disordered.

This sequence belongs to the bacterial ribosomal protein bL28 family.

This is Large ribosomal subunit protein bL28 from Paraburkholderia phytofirmans (strain DSM 17436 / LMG 22146 / PsJN) (Burkholderia phytofirmans).